Here is an 869-residue protein sequence, read N- to C-terminus: Bifunctional uridylyltransferase/uridylyl-removing enzyme (869 aa).

The tract at residues 1 to 332 (MTDTPAERPD…QFDGEATPEP (332 aa)) is uridylyltransferase. The segment at 333–691 (LGGGFSLRRG…RRAVPDNDAL (359 aa)) is uridylyl-removing. The 123-residue stretch at 450 to 572 (VDQHTLMVLR…VGTRERLDYL (123 aa)) folds into the HD domain. 2 ACT domains span residues 692–774 (EVFV…RAVP) and 798–869 (RISL…LDPV).

This sequence belongs to the GlnD family. It depends on Mg(2+) as a cofactor.

The catalysed reaction is [protein-PII]-L-tyrosine + UTP = [protein-PII]-uridylyl-L-tyrosine + diphosphate. It catalyses the reaction [protein-PII]-uridylyl-L-tyrosine + H2O = [protein-PII]-L-tyrosine + UMP + H(+). With respect to regulation, uridylyltransferase (UTase) activity is inhibited by glutamine, while glutamine activates uridylyl-removing (UR) activity. Modifies, by uridylylation and deuridylylation, the PII regulatory proteins (GlnB and homologs), in response to the nitrogen status of the cell that GlnD senses through the glutamine level. Under low glutamine levels, catalyzes the conversion of the PII proteins and UTP to PII-UMP and PPi, while under higher glutamine levels, GlnD hydrolyzes PII-UMP to PII and UMP (deuridylylation). Thus, controls uridylylation state and activity of the PII proteins, and plays an important role in the regulation of nitrogen assimilation and metabolism. The sequence is that of Bifunctional uridylyltransferase/uridylyl-removing enzyme from Xanthomonas euvesicatoria pv. vesicatoria (strain 85-10) (Xanthomonas campestris pv. vesicatoria).